The sequence spans 159 residues: Protein NrdI (159 aa).

It belongs to the NrdI family.

Functionally, probably involved in ribonucleotide reductase function. The chain is Protein NrdI from Rhodococcus erythropolis (strain PR4 / NBRC 100887).